Here is a 444-residue protein sequence, read N- to C-terminus: U4/U6 snRNA-associated-splicing factor PRP24 (444 aa).

A compositionally biased stretch (basic and acidic residues) spans 1 to 16 (MEYGHHARPDSKRPLD). The tract at residues 1-29 (MEYGHHARPDSKRPLDEGSPAAAGLTSKK) is disordered. Ser19 is subject to Phosphoserine. 3 consecutive RRM domains span residues 41–116 (TTVL…HLTE), 117–195 (CTLW…VSNP), and 210–289 (REIM…LADK).

As to quaternary structure, monomer. Interacts with U6 snRNA SNR6 and the LSM2-8 complex (small nuclear RNA); to chaperone formation of the U4/U6-U5 tri-snRNP (small nuclear ribonucleoprotein) assembly, the protein is displaced from the U4/U6 snRNP once pairing is complete.

Its subcellular location is the nucleus. Its function is as follows. Functions as a recycling factor of the spliceosome, a machinery that forms on each precursor-messenger RNA (pre-mRNA) and catalyzes the removal of introns. Chaperones the re-annealing of U4 and U6 snRNAs (small nuclear RNAs) released from previous rounds of splicing, an initial step in reforming the U4/U6-U5 tri-snRNP (small nuclear ribonucleoprotein) that can reassemble into another spliceosome complex; this step involves binding U6 and facilitating the unwinding of the U6 internal stem loop, followed by base-pairing of U6 to U4. The chain is U4/U6 snRNA-associated-splicing factor PRP24 (PRP24) from Saccharomyces cerevisiae (strain ATCC 204508 / S288c) (Baker's yeast).